A 311-amino-acid polypeptide reads, in one-letter code: MMKIIFMGTPDFSATVLKGLLDSGQYEVLAVVTQPDRAVGRKREIRMTPVKELALEYKLPVYQPEKLAKSSDLEELMNLEADGIVTAAFGQFLPSCLLDSVDFAVNVHASLLPKYRGGAPIHYALINGDEQAGVTIMEMVKEMDAGDMIASKATPIEETDNVGTLFEKLALIGRDLLLDVLPAYRAGQIIPQPQDPSQVTFSPNISPEEERIDWSKTNRQIFNQIRGMYPWPVAHTLLQGQRFKIYEADMMAGSGQPGQILSISKKELVVAAGKGALSLKTVQPAGKPKMAIVDFLNGLGRSLSLGDTFGK.

110-113 (SLLP) serves as a coordination point for (6S)-5,6,7,8-tetrahydrofolate.

The protein belongs to the Fmt family.

It catalyses the reaction L-methionyl-tRNA(fMet) + (6R)-10-formyltetrahydrofolate = N-formyl-L-methionyl-tRNA(fMet) + (6S)-5,6,7,8-tetrahydrofolate + H(+). In terms of biological role, attaches a formyl group to the free amino group of methionyl-tRNA(fMet). The formyl group appears to play a dual role in the initiator identity of N-formylmethionyl-tRNA by promoting its recognition by IF2 and preventing the misappropriation of this tRNA by the elongation apparatus. This is Methionyl-tRNA formyltransferase from Streptococcus sanguinis (strain SK36).